We begin with the raw amino-acid sequence, 89 residues long: Small ribosomal subunit protein uS15 (89 aa).

Belongs to the universal ribosomal protein uS15 family. Part of the 30S ribosomal subunit. Forms a bridge to the 50S subunit in the 70S ribosome, contacting the 23S rRNA.

In terms of biological role, one of the primary rRNA binding proteins, it binds directly to 16S rRNA where it helps nucleate assembly of the platform of the 30S subunit by binding and bridging several RNA helices of the 16S rRNA. Functionally, forms an intersubunit bridge (bridge B4) with the 23S rRNA of the 50S subunit in the ribosome. The chain is Small ribosomal subunit protein uS15 from Burkholderia ambifaria (strain MC40-6).